The primary structure comprises 427 residues: Serine--tRNA ligase (427 aa).

231–233 contributes to the L-serine binding site; that stretch reads TAE. ATP is bound at residue 262–264; it reads RSE. L-serine is bound at residue Glu285. Residue 349–352 coordinates ATP; that stretch reads EISS. Ser385 is an L-serine binding site.

Belongs to the class-II aminoacyl-tRNA synthetase family. Type-1 seryl-tRNA synthetase subfamily. In terms of assembly, homodimer. The tRNA molecule binds across the dimer.

Its subcellular location is the cytoplasm. It carries out the reaction tRNA(Ser) + L-serine + ATP = L-seryl-tRNA(Ser) + AMP + diphosphate + H(+). It catalyses the reaction tRNA(Sec) + L-serine + ATP = L-seryl-tRNA(Sec) + AMP + diphosphate + H(+). Its pathway is aminoacyl-tRNA biosynthesis; selenocysteinyl-tRNA(Sec) biosynthesis; L-seryl-tRNA(Sec) from L-serine and tRNA(Sec): step 1/1. Functionally, catalyzes the attachment of serine to tRNA(Ser). Is also able to aminoacylate tRNA(Sec) with serine, to form the misacylated tRNA L-seryl-tRNA(Sec), which will be further converted into selenocysteinyl-tRNA(Sec). In Rhizobium rhizogenes (strain K84 / ATCC BAA-868) (Agrobacterium radiobacter), this protein is Serine--tRNA ligase.